Reading from the N-terminus, the 288-residue chain is Peroxisomal membrane protein pex13 (288 aa).

Residues 1–32 (METNQNEKGPSLPSYPAGGIMSVSNSNADTNQ) are disordered. Residues 22–32 (SVSNSNADTNQ) show a composition bias toward polar residues. The chain crosses the membrane as a helical span at residues 178-198 (IYSIVSSLAIILGLVGLPYAI). The SH3 domain occupies 222–288 (DSLEFCKADY…PSNYCSIISR (67 aa)).

Belongs to the peroxin-13 family. In terms of assembly, interacts (via SH3 domain) with PEX14 (via SH3-binding motif); forming the PEX13-PEX14 docking complex.

The protein localises to the peroxisome membrane. Functionally, component of the PEX13-PEX14 docking complex, a translocon channel that specifically mediates the import of peroxisomal cargo proteins bound to PEX5 receptor. The PEX13-PEX14 docking complex forms a large import pore which can be opened to a diameter of about 9 nm. Mechanistically, PEX5 receptor along with cargo proteins associates with the PEX14 subunit of the PEX13-PEX14 docking complex in the cytosol, leading to the insertion of the receptor into the organelle membrane with the concomitant translocation of the cargo into the peroxisome matrix. The chain is Peroxisomal membrane protein pex13 (pex13) from Schizosaccharomyces pombe (strain 972 / ATCC 24843) (Fission yeast).